The sequence spans 205 residues: Probable GTP-binding protein EngB (205 aa).

The EngB-type G domain occupies 29–203; the sequence is QGAEIAFIGR…KAVLSQWFRS (175 aa). GTP contacts are provided by residues 37 to 44, 64 to 68, 82 to 85, 149 to 152, and 182 to 184; these read GRSNAGKS, GRTQM, DLPG, TKSD, and FSS. The Mg(2+) site is built by Ser-44 and Thr-66.

Belongs to the TRAFAC class TrmE-Era-EngA-EngB-Septin-like GTPase superfamily. EngB GTPase family. It depends on Mg(2+) as a cofactor.

Functionally, necessary for normal cell division and for the maintenance of normal septation. The polypeptide is Probable GTP-binding protein EngB (Coxiella burnetii (strain CbuG_Q212) (Coxiella burnetii (strain Q212))).